Here is a 458-residue protein sequence, read N- to C-terminus: MASNGGSCPSSGGHMNGYPVPHYAFFFPHMLGGLSPPGSLAGIPHPLPVSAYSTPSPATIETQSTSSEEIVPSPPSPPPLPRIYKPCFVCQDKSSGYHYGVSACEGCKGFFRRSIQKNMVYTCHRDKTCIINKVTRNRCQYCRLQKCFEVGMSKESVRNDRNKKKKQEAPKQECTESYIITPEVEDLVEKVRKAHQETFPALCQLGKYTTNNSSEERVSLDIDLWDKFSELSTKCIIKTVEFAKQLPGFTTLTIADQITLLKAACLDILILRICTRYTPDQDTMTFSDGLTLNRTQMHNAGFGPLTDLVFAFANQLLPLEMDDAETGLLSAICLICGDRQDLEQPDKVDKLQEPLLEALKIYVRKRRPNKPHMFPKMLMKITDLRSISAKGAERVITLKMEIPGSMPPLIQEMLENSEGLDSLTGQPPRASSLAPPPGSCSPSLSPSSNRSSPTSHSP.

A modulating region spans residues 1 to 86 (MASNGGSCPS…PPPLPRIYKP (86 aa)). Residues 54 to 68 (TPSPATIETQSTSSE) are compositionally biased toward polar residues. Residues 54-76 (TPSPATIETQSTSSEEIVPSPPS) form a disordered region. 2 NR C4-type zinc fingers span residues 87–107 (CFVC…CEGC) and 123–147 (CHRD…LQKC). Residues 87–152 (CFVCQDKSSG…RLQKCFEVGM (66 aa)) constitute a DNA-binding region (nuclear receptor). The interval 153–182 (SKESVRNDRNKKKKQEAPKQECTESYIITP) is hinge. The NR LBD domain maps to 183–417 (EVEDLVEKVR…PLIQEMLENS (235 aa)). Residues 408 to 416 (PLIQEMLEN) carry the 9aaTAD motif. The interval 417–458 (SEGLDSLTGQPPRASSLAPPPGSCSPSLSPSSNRSSPTSHSP) is disordered. Residues 440–458 (CSPSLSPSSNRSSPTSHSP) are compositionally biased toward low complexity.

It belongs to the nuclear hormone receptor family. NR1 subfamily. In terms of assembly, heterodimer; with an rxr molecule. Binds DNA preferentially as a rar/rxr heterodimer. Expressed in forelimb, in the distal forelimb blastema, kidney, liver and hindlimb blastemal mesenchymal cells.

It is found in the nucleus. Receptor for retinoic acid. Retinoic acid receptors bind as heterodimers to their target response elements in response to their ligands, all-trans or 9-cis retinoic acid, and regulate gene expression in various biological processes. The rar/rxr heterodimers bind to the retinoic acid response elements (RARE) composed of tandem 5'-AGGTCA-3' sites known as DR1-DR5. Retinoic acid signaling appears to be involved in specifying proximal-distal axis in limb regeneration. This Notophthalmus viridescens (Eastern newt) protein is Retinoic acid receptor alpha (RARA).